A 133-amino-acid chain; its full sequence is Small ribosomal subunit protein uS8 (133 aa).

The protein belongs to the universal ribosomal protein uS8 family. In terms of assembly, part of the 30S ribosomal subunit. Contacts proteins S5 and S12.

One of the primary rRNA binding proteins, it binds directly to 16S rRNA central domain where it helps coordinate assembly of the platform of the 30S subunit. This is Small ribosomal subunit protein uS8 from Chlamydia trachomatis serovar A (strain ATCC VR-571B / DSM 19440 / HAR-13).